The following is a 103-amino-acid chain: Acyl-CoA-binding protein (103 aa).

Positions 18-103 constitute an ACB domain; it reads HQADFDEAAE…AKTMVEKYGI (86 aa). An acyl-CoA is bound by residues Lys-30, 45-49, Lys-67, Lys-71, and Tyr-90; that span reads YGFYK.

This sequence belongs to the ACBP family. As to quaternary structure, monomer.

It localises to the endoplasmic reticulum. Its subcellular location is the golgi apparatus. Functionally, binds medium- and long-chain acyl-CoA esters with very high affinity and may function as an intracellular carrier of acyl-CoA esters. It is also able to displace diazepam from the benzodiazepine (BZD) recognition site located on the GABA type A receptor. It is therefore possible that this protein also acts as a neuropeptide to modulate the action of the GABA receptor. The chain is Acyl-CoA-binding protein (DBI) from Anas platyrhynchos (Mallard).